The following is an 88-amino-acid chain: Small ribosomal subunit protein uS15 (88 aa).

Belongs to the universal ribosomal protein uS15 family. In terms of assembly, part of the 30S ribosomal subunit. Forms a bridge to the 50S subunit in the 70S ribosome, contacting the 23S rRNA.

Its function is as follows. One of the primary rRNA binding proteins, it binds directly to 16S rRNA where it helps nucleate assembly of the platform of the 30S subunit by binding and bridging several RNA helices of the 16S rRNA. Forms an intersubunit bridge (bridge B4) with the 23S rRNA of the 50S subunit in the ribosome. The chain is Small ribosomal subunit protein uS15 from Finegoldia magna (strain ATCC 29328 / DSM 20472 / WAL 2508) (Peptostreptococcus magnus).